The chain runs to 224 residues: Deoxyribose-phosphate aldolase (224 aa).

The Proton donor/acceptor role is filled by Asp94. Residue Lys158 is the Schiff-base intermediate with acetaldehyde of the active site. Residue Lys187 is the Proton donor/acceptor of the active site.

Belongs to the DeoC/FbaB aldolase family. DeoC type 1 subfamily. As to quaternary structure, homodimer.

Its subcellular location is the cytoplasm. It carries out the reaction 2-deoxy-D-ribose 5-phosphate = D-glyceraldehyde 3-phosphate + acetaldehyde. With respect to regulation, activated by citrate. Inhibited by NaBH(4). Activity is independent of divalent metal cations. In terms of biological role, catalyzes a reversible aldol reaction between acetaldehyde and D-glyceraldehyde 3-phosphate to generate 2-deoxy-D-ribose 5-phosphate. Could be involved in pentose biosynthesis. This chain is Deoxyribose-phosphate aldolase, found in Thermococcus kodakarensis (strain ATCC BAA-918 / JCM 12380 / KOD1) (Pyrococcus kodakaraensis (strain KOD1)).